A 1170-amino-acid polypeptide reads, in one-letter code: Thrombospondin-1 (1170 aa).

An N-terminal signal peptide occupies residues 1 to 18; sequence MGLAWGLGVLFLMHVCGT. The segment at 47–95 is heparin-binding; sequence RLVKGPDPSSPAFRIEDANLIPPVPDDKFQDLVDAVRAEKGFLLLASLR. Positions 65–270 constitute a Laminin G-like domain; it reads NLIPPVPDDK…HKTKDLQAIC (206 aa). Cysteine 171 and cysteine 232 form a disulfide bridge. N-linked (GlcNAc...) asparagine glycans are attached at residues asparagine 248 and asparagine 360. The region spanning 316-373 is the VWFC domain; it reads PLCYHNGVQYRNNEEWTVDSCTECHCQNSVTICKKVSCPIMPCSNATVPDGECCPRCW. 3 TSP type-1 domains span residues 379–429, 435–490, and 492–547; these read DDGW…QECD, DGGW…DACP, and NGGW…QDCP. Tryptophan 385 is a glycosylation site (C-linked (Man) tryptophan). Disulfide bonds link cysteine 391–cysteine 423, cysteine 395–cysteine 428, and cysteine 406–cysteine 413. The O-linked (Fuc...) serine glycan is linked to serine 394. 2 C-linked (Man) tryptophan glycosylation sites follow: tryptophan 438 and tryptophan 441. 3 disulfide bridges follow: cysteine 447–cysteine 484, cysteine 451–cysteine 489, and cysteine 462–cysteine 474. O-linked (Fuc...) threonine glycosylation occurs at threonine 450. Tryptophan 498 is a glycosylation site (C-linked (Man) tryptophan). Disulfide bonds link cysteine 504–cysteine 541, cysteine 508–cysteine 546, cysteine 519–cysteine 531, cysteine 551–cysteine 562, cysteine 556–cysteine 572, cysteine 575–cysteine 586, cysteine 592–cysteine 608, cysteine 599–cysteine 617, cysteine 620–cysteine 644, cysteine 650–cysteine 663, cysteine 657–cysteine 676, cysteine 678–cysteine 689, cysteine 705–cysteine 713, cysteine 718–cysteine 738, cysteine 754–cysteine 774, cysteine 777–cysteine 797, cysteine 813–cysteine 833, cysteine 836–cysteine 856, cysteine 874–cysteine 894, cysteine 910–cysteine 930, and cysteine 946–cysteine 1167. An O-linked (Fuc...) threonine glycan is attached at threonine 507. The segment at 531–1152 is involved in retention in extracellular matrix (ECM); involved in trimer formation; it reads CVGDVTENQI…YAGGRLGLFV (622 aa). One can recognise an EGF-like 1 domain in the interval 547-587; sequence PIDGCLSNPCFAGVKCTSYPDGSWKCGACPPGYSGNGIQCT. O-linked (Xyl) serine glycosylation is present at serine 553. In terms of domain architecture, EGF-like 2 spans 646–690; it reads PRNPCTDGTHDCNKNAKCNYLGHYSDPMYRCECKPGYAGNGIICG. TSP type-3 repeat units lie at residues 691-726, 727-762, 763-785, 786-821, 822-844, 845-882, 883-918, and 919-954; these read EDTD…NSGQ, EDYD…NPAQ, YDYD…NPDQ, ADTD…NVDQ, RDTD…NPDQ, LDSD…NANQ, ADHD…NPDQ, and KDSD…DISE. Residue asparagine 708 is glycosylated (N-linked (GlcNAc...) asparagine). Positions 839–934 are disordered; that stretch reads EHNPDQLDSD…GRGDACKDDF (96 aa). Basic and acidic residues-rich tracts occupy residues 840 to 854, 883 to 894, and 917 to 934; these read HNPD…RIGD, ADHDKDGKGDAC, and DQKD…KDDF. Positions 926 to 928 match the Cell attachment site motif; it reads RGD. In terms of domain architecture, TSP C-terminal spans 958-1170; the sequence is RRFQMIPLDP…SDLKYECRDP (213 aa). Asparagine 1067 carries N-linked (GlcNAc...) asparagine glycosylation.

This sequence belongs to the thrombospondin family. In terms of assembly, homotrimer; disulfide-linked. Can bind to fibrinogen, fibronectin, laminin, type V collagen and integrins alpha-V/beta-1, alpha-V/beta-3 and alpha-IIb/beta-3. Binds heparin. Interacts (via the C-terminal domain) with CD47. Interacts (via the TSP type I repeats) with CD36; the interaction conveys an antiangiogenic effect. Interacts (via the TSP type I repeats) with HRG; the interaction blocks the antiangiogenic effect of THBS1 with CD36. Interacts with ATF6 (via lumenal domain). Interacts with FN1; this interaction is enhanced by TNFAIP6, which may act as a bridging molecule between FN1 and THBS1. Interacts with SIRPA; the interaction stimulates phosphorylation of SIRPA. Expressed by platelets (at protein level). Expressed by monocyte-derived immature and mature dendritic cells (at protein level).

It localises to the secreted. The protein localises to the cell surface. It is found in the extracellular space. The protein resides in the extracellular matrix. Its subcellular location is the endoplasmic reticulum. It localises to the sarcoplasmic reticulum. Functionally, adhesive glycoprotein that mediates cell-to-cell and cell-to-matrix interactions. Multifunctional, involved in inflammation, angiogenesis, wound healing, reactive oxygen species (ROS) signaling, nitrous oxide (NO) signaling, apoptosis, senescence, aging, cellular self-renewal, stemness, and cardiovascular and metabolic homeostasis. Negatively modulates dendritic cell activation and cytokine release, as part of an autocrine feedback loop, contributing to the resolution of inflammation and immune homeostasis. Ligand for receptor CD47. Modulates nitrous oxide (NO) signaling via CD47, hence playing a role as a pressor agent, supporting blood pressure. Plays a role in endothelial cell senescence, acting via CD47, by increasing the abundance and activation of NADPH oxidase NOX1, and so generating excess ROS. Inhibits stem cell self-renewal, acting via CD47 signaling, probably by regulation of the stem cell transcription factors POU5F1/OCT4, SOX2, MYC/c-Myc and KLF4. Negatively modulates wound healing, acting via CD47. Ligand for receptor CD36. Involved in inducing apoptosis in podocytes in response to elevated free fatty acids, acting via CD36. Plays a role in suppressing angiogenesis, acting, depending on context, via CD36 or CD47. Promotes cellular senescence in a TP53-CDKN1A-RB1 signaling-dependent manner. Ligand for immunoglobulin-like cell surface receptor SIRPA. Involved in ROS signaling in non-phagocytic cells, stimulating NADPH oxidase-derived ROS production, acting via interaction with SIRPA. Plays a role in metabolic dysfunction in diet-induced obesity, perhaps acting by exacerbating adipose inflammatory activity; its effects may be mediated, at least in part, through enhanced adipocyte proliferation. Plays a role in ER stress response, via its interaction with the activating transcription factor 6 alpha (ATF6) which produces adaptive ER stress response factors. May be involved in age-related conditions, including metabolic dysregulation, during normal aging. The protein is Thrombospondin-1 of Homo sapiens (Human).